We begin with the raw amino-acid sequence, 603 residues long: Proline--tRNA ligase (603 aa).

The protein belongs to the class-II aminoacyl-tRNA synthetase family. ProS type 1 subfamily. In terms of assembly, homodimer.

It is found in the cytoplasm. The catalysed reaction is tRNA(Pro) + L-proline + ATP = L-prolyl-tRNA(Pro) + AMP + diphosphate. Functionally, catalyzes the attachment of proline to tRNA(Pro) in a two-step reaction: proline is first activated by ATP to form Pro-AMP and then transferred to the acceptor end of tRNA(Pro). As ProRS can inadvertently accommodate and process non-cognate amino acids such as alanine and cysteine, to avoid such errors it has two additional distinct editing activities against alanine. One activity is designated as 'pretransfer' editing and involves the tRNA(Pro)-independent hydrolysis of activated Ala-AMP. The other activity is designated 'posttransfer' editing and involves deacylation of mischarged Ala-tRNA(Pro). The misacylated Cys-tRNA(Pro) is not edited by ProRS. The polypeptide is Proline--tRNA ligase (Paenarthrobacter aurescens (strain TC1)).